The primary structure comprises 483 residues: Matrix metalloproteinase-20 (483 aa).

Positions 1 to 22 (MKVLPASGLAVFLIMALKFSTA) are cleaved as a signal peptide. Positions 23–107 (APSLVAASPR…PRCGVPDVAN (85 aa)) are excised as a propeptide. The Cysteine switch motif lies at 98 to 105 (PRCGVPDV). Residue C100 coordinates Zn(2+). E164, A165, and D166 together coordinate Ca(2+). H176 and D178 together coordinate Zn(2+). Residues D183, G184, R186, and T188 each coordinate Ca(2+). Position 191 (H191) interacts with Zn(2+). 4 residues coordinate Ca(2+): E197, G198, G200, and D202. Position 204 (H204) interacts with Zn(2+). Ca(2+) is bound by residues D206 and E209. Position 226 (H226) interacts with Zn(2+). The active site involves E227. Zn(2+) is bound by residues H230 and H236. Hemopexin repeat units lie at residues 293-343 (PDLC…FPQL), 344-389 (MSNV…GFPR), 391-439 (VQQI…FSGV), and 440-483 (NGQI…WIGC). C296 and C483 are joined by a disulfide.

This sequence belongs to the peptidase M10A family. Zn(2+) serves as cofactor. Requires Ca(2+) as cofactor. In terms of processing, autoactivates at least at the 107-Asn-|-Tyr-108 site. Expressed specifically in the enamel organ.

It localises to the secreted. It is found in the extracellular space. The protein resides in the extracellular matrix. Functionally, degrades amelogenin, the major protein component of the enamel matrix and two of the macromolecules characterizing the cartilage extracellular matrix: aggrecan and the cartilage oligomeric matrix protein (COMP). May play a central role in tooth enamel formation. Cleaves aggrecan at the '360-Asn-|-Phe-361' site. This is Matrix metalloproteinase-20 (MMP20) from Homo sapiens (Human).